Reading from the N-terminus, the 702-residue chain is Elongation factor G 2 (702 aa).

Residues 8-290 form the tr-type G domain; that stretch reads ERYRNIGISA…AVIDYLPSPV (283 aa). GTP-binding positions include 17-24, 88-92, and 142-145; these read AHIDAGKT, DTPGH, and NKMD.

It belongs to the TRAFAC class translation factor GTPase superfamily. Classic translation factor GTPase family. EF-G/EF-2 subfamily.

It localises to the cytoplasm. In terms of biological role, catalyzes the GTP-dependent ribosomal translocation step during translation elongation. During this step, the ribosome changes from the pre-translocational (PRE) to the post-translocational (POST) state as the newly formed A-site-bound peptidyl-tRNA and P-site-bound deacylated tRNA move to the P and E sites, respectively. Catalyzes the coordinated movement of the two tRNA molecules, the mRNA and conformational changes in the ribosome. The protein is Elongation factor G 2 of Cupriavidus metallidurans (strain ATCC 43123 / DSM 2839 / NBRC 102507 / CH34) (Ralstonia metallidurans).